We begin with the raw amino-acid sequence, 153 residues long: Protein Smg homolog (153 aa).

It belongs to the Smg family.

The protein is Protein Smg homolog of Neisseria gonorrhoeae (strain ATCC 700825 / FA 1090).